The following is a 520-amino-acid chain: MSNISTDLQDVEKIIVLDYGSQYNQLISRRIREIGVFSELKSHKISAAEVREVNPVGIILSGGPNSVYEDGSFDIDPEIFELGIPILGICYGMQLLTHKLGGKVVPAGDAGNREYGQSTLTHTPSALFESTPDEQTVLMSHGDAVTEIPADFVRTGTSADCPYAAIENPDKHIYGIQFHPEVRHSVYGNDILRNFALNICKAKGDWSMDNFIDMQIKKIRETVGDKRVLLGLSGGVDSSVVGVLLQKAIGDQLICIFVDHGLLRKGEADQVMDMLGGKFGLNIVKADAAKRFLDKLAGVSDPEQKRKIIGNEFVYVFDDEASKLKDVKFLAQGTLYTDVIESGTDTAQTIKSHHNVGGLPEDMQFELIEPLNTLYKDEVRALGTELGMPDHIVWRQPFPGPGLAIRVMGEITEEKLETVRESDAILREEIAKAGLDRDIWQYFTVNTGVRSVGVMGDGRTYDYTIAIRAITSIDGMTADFAKIPWEVLQKISVRIVNEVDHVNRIVYDITSKPPATVEWE.

In terms of domain architecture, Glutamine amidotransferase type-1 spans K13–D205. C90 serves as the catalytic Nucleophile. Residues H179 and E181 contribute to the active site. The 190-residue stretch at W206 to R395 folds into the GMPS ATP-PPase domain. S233–S239 contributes to the ATP binding site.

In terms of assembly, homodimer.

It carries out the reaction XMP + L-glutamine + ATP + H2O = GMP + L-glutamate + AMP + diphosphate + 2 H(+). It participates in purine metabolism; GMP biosynthesis; GMP from XMP (L-Gln route): step 1/1. Functionally, catalyzes the synthesis of GMP from XMP. The polypeptide is GMP synthase [glutamine-hydrolyzing] (Streptococcus pneumoniae serotype 2 (strain D39 / NCTC 7466)).